Reading from the N-terminus, the 130-residue chain is MDRLSFLTFIMLILASYRLTHLIVFDKITEFIRKPFMKKKRIVDQNGHVDEKSVPASNFGYMLNCYWCAGVWCAILIGLGYLFLPRIAIPLIFILAIAGAQAILETAVGVGVKLIDVLKSLQTMMNDKKS.

3 consecutive transmembrane segments (helical) span residues 4–25 (LSFLTFIMLILASYRLTHLIVF), 62–84 (MLNCYWCAGVWCAILIGLGYLFL), and 89–111 (IPLIFILAIAGAQAILETAVGVG).

This sequence belongs to the UPF0713 family.

It is found in the cell membrane. In Bacillus subtilis (strain 168), this protein is UPF0713 protein YngL (yngL).